Here is a 433-residue protein sequence, read N- to C-terminus: 3-phosphoshikimate 1-carboxyvinyltransferase (433 aa).

Residues K21, S22, and R26 each contribute to the 3-phosphoshikimate site. Position 21 (K21) interacts with phosphoenolpyruvate. Positions 92 and 120 each coordinate phosphoenolpyruvate. Residues S166, Q168, D317, and K344 each contribute to the 3-phosphoshikimate site. Q168 serves as a coordination point for phosphoenolpyruvate. The active-site Proton acceptor is D317. Phosphoenolpyruvate contacts are provided by R348 and R391.

It belongs to the EPSP synthase family. Monomer.

The protein resides in the cytoplasm. It catalyses the reaction 3-phosphoshikimate + phosphoenolpyruvate = 5-O-(1-carboxyvinyl)-3-phosphoshikimate + phosphate. It participates in metabolic intermediate biosynthesis; chorismate biosynthesis; chorismate from D-erythrose 4-phosphate and phosphoenolpyruvate: step 6/7. Functionally, catalyzes the transfer of the enolpyruvyl moiety of phosphoenolpyruvate (PEP) to the 5-hydroxyl of shikimate-3-phosphate (S3P) to produce enolpyruvyl shikimate-3-phosphate and inorganic phosphate. The protein is 3-phosphoshikimate 1-carboxyvinyltransferase of Caldicellulosiruptor saccharolyticus (strain ATCC 43494 / DSM 8903 / Tp8T 6331).